We begin with the raw amino-acid sequence, 237 residues long: 1-(5-phosphoribosyl)-5-[(5-phosphoribosylamino)methylideneamino] imidazole-4-carboxamide isomerase (237 aa).

The Proton acceptor role is filled by Asp8. Asp129 serves as the catalytic Proton donor.

It belongs to the HisA/HisF family.

It localises to the cytoplasm. It catalyses the reaction 1-(5-phospho-beta-D-ribosyl)-5-[(5-phospho-beta-D-ribosylamino)methylideneamino]imidazole-4-carboxamide = 5-[(5-phospho-1-deoxy-D-ribulos-1-ylimino)methylamino]-1-(5-phospho-beta-D-ribosyl)imidazole-4-carboxamide. The protein operates within amino-acid biosynthesis; L-histidine biosynthesis; L-histidine from 5-phospho-alpha-D-ribose 1-diphosphate: step 4/9. This is 1-(5-phosphoribosyl)-5-[(5-phosphoribosylamino)methylideneamino] imidazole-4-carboxamide isomerase from Alkaliphilus metalliredigens (strain QYMF).